A 94-amino-acid chain; its full sequence is Small ubiquitin-related modifier 3 (94 aa).

A Glycyl lysine isopeptide (Lys-Gly) (interchain with G-Cter in SUMO) cross-link involves residue Lys11. A Ubiquitin-like domain is found at 15–92 (DHINLKVAGQ…IDVFQQQTGG (78 aa)). Gly92 participates in a covalent cross-link: Glycyl lysine isopeptide (Gly-Lys) (interchain with K-? in acceptor proteins). Residues 93 to 94 (VC) constitute a propeptide that is removed on maturation.

Belongs to the ubiquitin family. SUMO subfamily. Interacts with sae2 and ube2i. Covalently attached to a number of proteins. Polymeric chains can be formed through Lys-11 cross-linking. Post-translationally, cleavage of precursor form by a sentrin-specific protease is necessary for function.

Its subcellular location is the cytoplasm. It is found in the nucleus. The protein resides in the PML body. Ubiquitin-like protein which can be covalently attached to target lysines either as a monomer or as a lysine-linked polymer. Does not seem to be involved in protein degradation and may function as an antagonist of ubiquitin in the degradation process. Plays a role in a number of cellular processes such as nuclear transport, DNA replication and repair, mitosis and signal transduction. Covalent attachment to its substrates requires prior activation by the E1 complex sae1-sae2 and linkage to the E2 enzyme ube2i. In Xenopus laevis (African clawed frog), this protein is Small ubiquitin-related modifier 3 (sumo3).